Consider the following 305-residue polypeptide: Carbamate kinase (305 aa).

This sequence belongs to the carbamate kinase family.

Its subcellular location is the cytoplasm. It carries out the reaction hydrogencarbonate + NH4(+) + ATP = carbamoyl phosphate + ADP + H2O + H(+). It participates in metabolic intermediate metabolism; carbamoyl phosphate degradation; CO(2) and NH(3) from carbamoyl phosphate: step 1/1. The protein is Carbamate kinase (arcC) of Thermoplasma volcanium (strain ATCC 51530 / DSM 4299 / JCM 9571 / NBRC 15438 / GSS1).